The following is an 855-amino-acid chain: DNA mismatch repair protein MutS (855 aa).

Residue 616–623 (GPNMGGKS) participates in ATP binding.

Belongs to the DNA mismatch repair MutS family.

This protein is involved in the repair of mismatches in DNA. It is possible that it carries out the mismatch recognition step. This protein has a weak ATPase activity. The chain is DNA mismatch repair protein MutS from Salmonella schwarzengrund (strain CVM19633).